The chain runs to 123 residues: Defensin beta 118 (123 aa).

Positions 1–19 (MKLLLLALPMLVLLPQVIP) are cleaved as a signal peptide. 3 disulfides stabilise this stretch: cysteine 27–cysteine 54, cysteine 34–cysteine 48, and cysteine 38–cysteine 55. A propeptide spanning residues 65–123 (VPTTSPTPLSDSTRGVIDDILTVRFTTDYFEVSSKKNMVEESEVGQGTQTSLPNVHHSS) is cleaved from the precursor. A disordered region spans residues 100–123 (KNMVEESEVGQGTQTSLPNVHHSS). Residues 109–123 (GQGTQTSLPNVHHSS) are compositionally biased toward polar residues.

This sequence belongs to the beta-defensin family. The three-dimensional structure formed by the three intramolecular disulfide bridges is indispensable for antimicrobial activity.

The protein resides in the secreted. Its function is as follows. Host defense peptide that exhibits antimicrobial activity against both Gram-negative bacteria, such as E.coli and S.typhimurium, and Gram-positive bacteria, such as S.aureus and B.subtilis. Inhibits cell adhesion of E.coli on intestinal epithelial enterocytes. Causes rapid permeabilization of both the outer and inner membrane of E.coli, leading to morphological alterations on the bacterial surface. Binds to bacterial lipopolysaccharides (LPS) with high affinity, and may thereby be involved in immunoregulation through LPS neutralization. May contribute to epididymal innate immunity and protect the sperm against attack by microorganisms. This Pongo pygmaeus (Bornean orangutan) protein is Defensin beta 118 (DEFB118).